The sequence spans 214 residues: Rac-like GTP-binding protein 3 (214 aa).

15 to 22 (GDGAVGKT) contacts GTP. The short motif at 37 to 45 (YIPTVFDNF) is the Effector region element. GTP contacts are provided by residues 62 to 66 (DTAGQ) and 120 to 123 (TKLD).

The protein belongs to the small GTPase superfamily. Rho family. May be palmitoylated.

It is found in the cytoplasm. It localises to the membrane. Inactive GDP-bound Rho GTPases reside in the cytosol, are found in a complex with Rho GDP-dissociation inhibitors (Rho GDIs), and are released from the GDI protein in order to translocate to membranes upon activation. This is Rac-like GTP-binding protein 3 (RAC3) from Oryza sativa subsp. japonica (Rice).